The chain runs to 92 residues: Small ribosomal subunit protein uS19c (92 aa).

This sequence belongs to the universal ribosomal protein uS19 family.

It localises to the plastid. Its subcellular location is the chloroplast. Protein S19 forms a complex with S13 that binds strongly to the 16S ribosomal RNA. This chain is Small ribosomal subunit protein uS19c (rps19), found in Anthoceros angustus (Hornwort).